The following is a 388-amino-acid chain: MSGQALAQLEGVREDAGGFDLLAPDGTQYRVDVTDGVFDPHNPLLAGYVAGRRVVAFVGPTVDRIYGDRLRAYLDARLEPGSWSVHTIDSGERNKTLASVERVCAIAKASGLDRHGVMLAVGGGIVADIVGFAASMYARGIRYIKVNTTLVGQVDVGVGVKTGVNALNTKNMFGAYHPAHASLNDPALLATLPAREIRCGLAEIVKMAVILDAGLFEALEEHPDAFLRSSDGALETYVVRTSMRLMMEELCPNLREHDLARLVDFGHTFSPVIETAGGHRLEHGEAVAVDMALSAHLARLLGLADAESCRRVVTLLRRIGLPVFDPATCTPELMTQALHASWQRRGRELHLVVPTGIGKATFVERLEDVPAEVLRAALDALAREGRTS.

Residues 92–95 (ERNK), 124–128 (GIVAD), 148–149 (TT), Lys161, Lys170, and 188–191 (LLAT) each bind NAD(+). The Zn(2+) site is built by Glu203, His267, and His283.

The protein belongs to the sugar phosphate cyclases superfamily. EEVS-like family. The cofactor is NAD(+). Requires Co(2+) as cofactor. Zn(2+) serves as cofactor.

The enzyme catalyses D-sedoheptulose 7-phosphate = 2-epi-5-epi-valiolone + phosphate. Its function is as follows. Catalyzes the cyclization of D-sedoheptulose 7-phosphate to 2-epi-5-epi-valiolone. Probably involved in acarbose biosynthesis. In Streptomyces glaucescens, this protein is 2-epi-5-epi-valiolone synthase.